The sequence spans 318 residues: L-lactate dehydrogenase 1 (318 aa).

NAD(+)-binding positions include valine 17, aspartate 38, lysine 43, tyrosine 69, and glycine 83–alanine 84. Substrate is bound by residues glutamine 86, arginine 92, and asparagine 124–aspartate 127. Residues alanine 122–asparagine 124 and serine 147 contribute to the NAD(+) site. Residue aspartate 152–arginine 155 coordinates substrate. Beta-D-fructose 1,6-bisphosphate contacts are provided by arginine 157 and histidine 172. Histidine 179 (proton acceptor) is an active-site residue. Tyrosine 224 is modified (phosphotyrosine). Substrate is bound at residue threonine 233.

Belongs to the LDH/MDH superfamily. LDH family. As to quaternary structure, homotetramer.

It localises to the cytoplasm. It carries out the reaction (S)-lactate + NAD(+) = pyruvate + NADH + H(+). Its pathway is fermentation; pyruvate fermentation to lactate; (S)-lactate from pyruvate: step 1/1. Allosterically activated by fructose 1,6-bisphosphate (FBP). Catalyzes the conversion of lactate to pyruvate. This Peribacillus psychrosaccharolyticus (Bacillus psychrosaccharolyticus) protein is L-lactate dehydrogenase 1.